Here is a 115-residue protein sequence, read N- to C-terminus: Virion-associated protein (115 aa).

Coiled-coil stretches lie at residues 1-28 (MAAT…MLER) and 33-54 (KPTG…KIDQ). Residues 96-106 (GNEELGSSGNP) are compositionally biased toward polar residues. A disordered region spans residues 96–115 (GNEELGSSGNPNAVKWPPRK).

It belongs to the caulimovirus ORF III family. Homotetramer, through coiled-coil domain. Homotrimer when interacts with icosehadral capsid. Interacts with capsid protein, and with Movement protein.

It localises to the virion. It is found in the host cell junction. The protein resides in the host plasmodesma. Its function is as follows. Plays a role in virus cell-to-cell and plant-to-plant transmission. Interacts with virion icosahedral capsid and movement protein, thereby facilitating virion cell-to-cell transmission through plasmodesmata opened by viral movement protein. Also interacts with aphid transmission factor, attaching the virion to aphid stylet when the animal feeds on an virus infected plant. Aphid saliva may later detach the virion, inducing release of infectious particles when the animal feeds on a new plant. This is Virion-associated protein from Scrophularia californica (California bee plant).